A 367-amino-acid polypeptide reads, in one-letter code: Chorismate synthase (367 aa).

NADP(+) is bound at residue Arg48. FMN-binding positions include 125–127 (RSS), Gly284, 299–303 (KPTPS), and Arg325.

Belongs to the chorismate synthase family. In terms of assembly, homotetramer. FMNH2 serves as cofactor.

It carries out the reaction 5-O-(1-carboxyvinyl)-3-phosphoshikimate = chorismate + phosphate. The protein operates within metabolic intermediate biosynthesis; chorismate biosynthesis; chorismate from D-erythrose 4-phosphate and phosphoenolpyruvate: step 7/7. Functionally, catalyzes the anti-1,4-elimination of the C-3 phosphate and the C-6 proR hydrogen from 5-enolpyruvylshikimate-3-phosphate (EPSP) to yield chorismate, which is the branch point compound that serves as the starting substrate for the three terminal pathways of aromatic amino acid biosynthesis. This reaction introduces a second double bond into the aromatic ring system. This chain is Chorismate synthase, found in Lachnoclostridium phytofermentans (strain ATCC 700394 / DSM 18823 / ISDg) (Clostridium phytofermentans).